The chain runs to 368 residues: MMRGAAPTGVVSVMVLMILVLLKQIESASANGSSLGLPPRKFCNIYQGSWVYDKSYPLYDSKNCPFIERQFNCKSNGRPDSEYLKYRWQPSGCNLPRFNGLDFLGRIMKGKKLMFVGDSLSLNQWQSLTCLLHNAAPKANSTSTRSPSGLSVFSFPAYNSSIMFSRNAFLVDIVGAPPKRVMKLDSISSGSLWKTADVLVFNSWHWWLHTDRKQPWDAIMSGNVTVKDMDRLVAYEKAMMTWAKWIDQNIDPSKTKVFFQGISPDHGRAREWSKQGGKGSCIGETKPIMGSSYLAGPHAAEMVVAKVIKTMKNQARLMDVTLMSQLRKDGHPSVYGFGGHRMADCSHWCLSGVPDSWNQLLYSELFHS.

The chain crosses the membrane as a helical; Signal-anchor for type II membrane protein span at residues 9–25; sequence GVVSVMVLMILVLLKQI. A GDS motif motif is present at residues 117-119; that stretch reads GDS. Positions 344–358 match the DCXHWCLPGXXDXWN motif motif; that stretch reads DCSHWCLSGVPDSWN.

Belongs to the PC-esterase family. TBL subfamily.

The protein localises to the membrane. In terms of biological role, may act as a bridging protein that binds pectin and other cell wall polysaccharides. Probably involved in maintaining esterification of pectins. May be involved in the specific O-acetylation of cell wall polymers. In Arabidopsis thaliana (Mouse-ear cress), this protein is Protein trichome birefringence-like 43 (TBL43).